A 549-amino-acid polypeptide reads, in one-letter code: Oxygen-dependent choline dehydrogenase (549 aa).

Residue 4–33 (DFVIIGSGSAGSALAYRLSEDGANSVVVLE) coordinates FAD. The active-site Proton acceptor is the histidine 465.

It belongs to the GMC oxidoreductase family. The cofactor is FAD.

The enzyme catalyses choline + A = betaine aldehyde + AH2. It carries out the reaction betaine aldehyde + NAD(+) + H2O = glycine betaine + NADH + 2 H(+). Its pathway is amine and polyamine biosynthesis; betaine biosynthesis via choline pathway; betaine aldehyde from choline (cytochrome c reductase route): step 1/1. In terms of biological role, involved in the biosynthesis of the osmoprotectant glycine betaine. Catalyzes the oxidation of choline to betaine aldehyde and betaine aldehyde to glycine betaine at the same rate. This is Oxygen-dependent choline dehydrogenase from Sinorhizobium medicae (strain WSM419) (Ensifer medicae).